Consider the following 554-residue polypeptide: MADHGEHGVPEQQNAPPKKGLRFWLIFLAIGIATFVAALDTSIISTALPTITADLGSEELYIWIINTYLLSSTVSSAIVGQLSNIFGRRSMTTLALLIFAVGSAISGAARDTGMLLAGRTIQGLGGGSITTLSEVLVCDMVSLRERGVYAGILGAAWTLAAVVGPIMGGGFTQNVSWRWIFYINLPIAGSSLFLIVTLLRVRNPRSDTSILRRLRTIDWGGITLLTLGVTAILLSLTWAGTTHPWSSWRTIVPLILGFLGLLGFIAYEALPPEPTMPLRLFRNRTAATLFVMAFIYSLLLFWVCYFLPIYFQAVLNATPTRSAVMLFPVATTTAPAGIVAGILMTKTGRYRSFQYIGFALMTIACGLFTLLDQSTTTGEWTGYQILFGVGTGIVFTTGLPPILASLPESDVATGTATWIFMRNFGAIWGTAIPAAVFNTKANALASQTIDDPTVRGLLVNGGAYERATKAFVSSFKSRPAVMRAIRRLYVVSLREVWQVSIAFCGVGFLLCFLVKAYRLREELNTEYGMQLWRPVFKRLVCTWYLAGSANLMCT.

Transmembrane regions (helical) follow at residues Trp-24 to Ile-44, Leu-60 to Gly-80, Leu-96 to Leu-116, Gly-123 to Leu-143, and Gly-151 to Phe-171. N-linked (GlcNAc...) asparagine glycosylation is present at Asn-174. 3 helical membrane passes run Trp-179–Leu-199, Trp-219–Ala-239, and Ile-251–Pro-271. Asn-283 carries N-linked (GlcNAc...) asparagine glycosylation. A run of 6 helical transmembrane segments spans residues Leu-289–Ile-309, Val-324–Met-344, Ser-352–Asp-372, Ile-385–Ser-405, Thr-417–Phe-437, and Val-496–Ala-516.

It belongs to the major facilitator superfamily.

It localises to the membrane. MFS-type transporter that may have a role in the biosynthesis of acurin A, a highly reduced polyketide coupled to a serine via a peptide bond; either in extra- or intracellular transport. The chain is Acurin A biosynthesis cluster MFS-type transporter from Aspergillus aculeatus (strain ATCC 16872 / CBS 172.66 / WB 5094).